Reading from the N-terminus, the 510-residue chain is NAD(P)H-quinone oxidoreductase subunit 2 B, chloroplastic (510 aa).

Transmembrane regions (helical) follow at residues 24–44, 59–79, 99–119, 124–144, 149–169, 184–204, 229–249, 261–281, 295–315, 323–343, 354–374, 395–415, 418–438, and 484–504; these read LLLFHGSFIFPECILIFGLIL, WFYFISSTSLVISITALLFRW, IFQFLILLCSTLCIPLSVEYI, MAITEFLLFVLTATLGGMFLC, LITIFVALECFSLCSYLLSGY, LLMGGASSSILVYGFSWLYGL, ISIALIFITVGLGFKLSLAPF, PTPVVAFLSVTSKVAALALAT, WHLLLEILAILSMILGNLLAI, MLAYSSIGQIGYVIIGIIVGD, YMLFYISMNLGTFACIVLFGL, ALSLALCLLSLGGLPPLAGFF, LYLFWCGWQAGLYFLVSIGLL, and MTVCVIASTILGISMNPILAI.

This sequence belongs to the complex I subunit 2 family. As to quaternary structure, NDH is composed of at least 16 different subunits, 5 of which are encoded in the nucleus.

The protein resides in the plastid. It localises to the chloroplast thylakoid membrane. The enzyme catalyses a plastoquinone + NADH + (n+1) H(+)(in) = a plastoquinol + NAD(+) + n H(+)(out). The catalysed reaction is a plastoquinone + NADPH + (n+1) H(+)(in) = a plastoquinol + NADP(+) + n H(+)(out). NDH shuttles electrons from NAD(P)H:plastoquinone, via FMN and iron-sulfur (Fe-S) centers, to quinones in the photosynthetic chain and possibly in a chloroplast respiratory chain. The immediate electron acceptor for the enzyme in this species is believed to be plastoquinone. Couples the redox reaction to proton translocation, and thus conserves the redox energy in a proton gradient. This Zea mays (Maize) protein is NAD(P)H-quinone oxidoreductase subunit 2 B, chloroplastic.